The primary structure comprises 438 residues: Ribosomal protein uS12 methylthiotransferase RimO (438 aa).

One can recognise an MTTase N-terminal domain in the interval 6 to 118 (KQLCLISLGC…IDILIAKKQN (113 aa)). 6 residues coordinate [4Fe-4S] cluster: C15, C49, C81, C150, C154, and C157. Positions 136–364 (TGSSVHAYVK…NKIALKHQHN (229 aa)) constitute a Radical SAM core domain.

This sequence belongs to the methylthiotransferase family. RimO subfamily. The cofactor is [4Fe-4S] cluster.

Its subcellular location is the cytoplasm. The enzyme catalyses L-aspartate(89)-[ribosomal protein uS12]-hydrogen + (sulfur carrier)-SH + AH2 + 2 S-adenosyl-L-methionine = 3-methylsulfanyl-L-aspartate(89)-[ribosomal protein uS12]-hydrogen + (sulfur carrier)-H + 5'-deoxyadenosine + L-methionine + A + S-adenosyl-L-homocysteine + 2 H(+). Catalyzes the methylthiolation of an aspartic acid residue of ribosomal protein uS12. This chain is Ribosomal protein uS12 methylthiotransferase RimO, found in Helicobacter acinonychis (strain Sheeba).